Here is a 221-residue protein sequence, read N- to C-terminus: Eukaryotic translation initiation factor 3 subunit K (221 aa).

The PCI domain occupies Y46–K207.

This sequence belongs to the eIF-3 subunit K family. In terms of assembly, component of the eukaryotic translation initiation factor 3 (eIF-3) complex.

The protein resides in the cytoplasm. Component of the eukaryotic translation initiation factor 3 (eIF-3) complex, which is involved in protein synthesis of a specialized repertoire of mRNAs and, together with other initiation factors, stimulates binding of mRNA and methionyl-tRNAi to the 40S ribosome. The eIF-3 complex specifically targets and initiates translation of a subset of mRNAs involved in cell proliferation. This is Eukaryotic translation initiation factor 3 subunit K from Aedes aegypti (Yellowfever mosquito).